Here is a 967-residue protein sequence, read N- to C-terminus: MANRKLEKMASIDVHLRQLVPGKVSEDDKLVEYDALLLDRFLDILQDLHGEDLRETVQELYEHSAEYEGKHEPKKLEELGSVLTSLDPGDSIVIAKAFSHMLNLANLAEEVQIAYRRRIKKLKKGDFVDESSATTESDLEETFKKLVGDLNKSPEEIFDALKNQTVDLVLTAHPTQSVRRSLLQKHGRIRDCLAQLYAKDITPDDKQELDEALQREIQAAFRTDEIKRTPPTPQDEMRAGMSYFHETIWKGVPKFLRRVDTALKNIGIEERVPYNAPLIQFSSWMGGDRDGNPRVTPEVTRDVCLLARMMAATMYFNQIEDLMFEMSMWRCNDELRARADEVHANSRKDAAKHYIEFWKSIPTTEPYRVILGDVRDKLYHTRERAHQLLSNGHSDVPVEATFINLEQFLEPLELCYRSLCSCGDRPIADGSLLDFLRQVSTFGLSLVRLDIRQESDRHTDVLDAITTHLDIGSYREWSEERRQEWLLSELSGKRPLFGSDLPKTEEIADVLDTFHVIAELPADSFGAYIISMATAPSDVLAVELLQRECRVKQPLRVVPLFEKLADLEAAPAAVARLFSVDWYKNRINGKQEVMIGYSDSGKDAGRLSAAWQLYKAQEELVKVAKEYGVKLTMFHGRGGTVGRGGGPTHLAILSQPPDTINGSLRVTVQGEVIEQSFGEEHLCFRTLQRFTAATLEHGMRPPISPKPEWRALLDEMAVVATEEYRSVVFQEPRFVEYFRLATPELEYGRMNIGSRPSKRKPSGGIESLRAIPWIFAWTQTRFHLPVWLGFGSAIRHVIEKDVRNLHMLQDMYQHWPFFRVTIDLIEMVFAKGDPGIAALYDKLLVSEELWPFGEKLRANFEETKKLILQTAGHKDLLEGDPYLKQRLRLRDSYITTLNVCQAYTLKRIRDPSYHVTLRPHISKEIAESSKPAKELIELNPTSEYAPGLEDTLILTMKGIAAGLQNTG.

Phosphoserine is present on serine 11. Active-site residues include histidine 173 and lysine 602. A Phosphoserine modification is found at serine 704.

It belongs to the PEPCase type 1 family. As to quaternary structure, homotetramer. The cofactor is Mg(2+). Mn(2+) is required as a cofactor. In terms of processing, the phosphorylation of Ser-11 is reversibly promoted by inorganic phosphate (Pi) deprivation. Enhanced activity by phosphorylation at pH 7.3 by lowering Km and sensitivity to inhibition by L-malate and L-aspartate, while enhancing activation by glucose 6-phosphate. Expressed in all plant organs, with higher levels in roots.

Its subcellular location is the cytoplasm. It carries out the reaction oxaloacetate + phosphate = phosphoenolpyruvate + hydrogencarbonate. Its activity is regulated as follows. By light-reversible phosphorylation. Activated by inorganic phosphate (Pi) deprivation and glucose 6-phosphate. Inhibited by L-malate and L-aspartate. Functionally, through the carboxylation of phosphoenolpyruvate (PEP) it forms oxaloacetate, a four-carbon dicarboxylic acid source for the tricarboxylic acid cycle. Contributes probably to the adaptation to inorganic phosphate (Pi) deprivation. The polypeptide is Phosphoenolpyruvate carboxylase 1 (PPC1) (Arabidopsis thaliana (Mouse-ear cress)).